Here is a 399-residue protein sequence, read N- to C-terminus: Bifunctional enzyme IspD/IspF (399 aa).

The tract at residues 1–235 (METWALILAA…MVEQPKTTVP (235 aa)) is 2-C-methyl-D-erythritol 4-phosphate cytidylyltransferase. The segment at 236-399 (IVGYGYDVHK…IVIVTAIRIS (164 aa)) is 2-C-methyl-D-erythritol 2,4-cyclodiphosphate synthase. Asp242 and His244 together coordinate a divalent metal cation. 4-CDP-2-C-methyl-D-erythritol 2-phosphate is bound by residues 242 to 244 (DVH) and 275 to 276 (HS). An a divalent metal cation-binding site is contributed by His283. Residues 297–299 (DIG), 302–306 (FPDSD), 373–376 (TTEE), and Phe380 each bind 4-CDP-2-C-methyl-D-erythritol 2-phosphate.

In the N-terminal section; belongs to the IspD/TarI cytidylyltransferase family. IspD subfamily. The protein in the C-terminal section; belongs to the IspF family. It depends on a divalent metal cation as a cofactor.

It catalyses the reaction 2-C-methyl-D-erythritol 4-phosphate + CTP + H(+) = 4-CDP-2-C-methyl-D-erythritol + diphosphate. The enzyme catalyses 4-CDP-2-C-methyl-D-erythritol 2-phosphate = 2-C-methyl-D-erythritol 2,4-cyclic diphosphate + CMP. The protein operates within isoprenoid biosynthesis; isopentenyl diphosphate biosynthesis via DXP pathway; isopentenyl diphosphate from 1-deoxy-D-xylulose 5-phosphate: step 2/6. It participates in isoprenoid biosynthesis; isopentenyl diphosphate biosynthesis via DXP pathway; isopentenyl diphosphate from 1-deoxy-D-xylulose 5-phosphate: step 4/6. Its function is as follows. Bifunctional enzyme that catalyzes the formation of 4-diphosphocytidyl-2-C-methyl-D-erythritol from CTP and 2-C-methyl-D-erythritol 4-phosphate (MEP) (IspD), and catalyzes the conversion of 4-diphosphocytidyl-2-C-methyl-D-erythritol 2-phosphate (CDP-ME2P) to 2-C-methyl-D-erythritol 2,4-cyclodiphosphate (ME-CPP) with a corresponding release of cytidine 5-monophosphate (CMP) (IspF). The chain is Bifunctional enzyme IspD/IspF from Lawsonia intracellularis (strain PHE/MN1-00).